We begin with the raw amino-acid sequence, 220 residues long: N-(5'-phosphoribosyl)anthranilate isomerase (220 aa).

It belongs to the TrpF family.

It carries out the reaction N-(5-phospho-beta-D-ribosyl)anthranilate = 1-(2-carboxyphenylamino)-1-deoxy-D-ribulose 5-phosphate. It participates in amino-acid biosynthesis; L-tryptophan biosynthesis; L-tryptophan from chorismate: step 3/5. This chain is N-(5'-phosphoribosyl)anthranilate isomerase, found in Xylella fastidiosa (strain 9a5c).